The sequence spans 109 residues: Putative double-stranded DNA mimic protein YciU (109 aa).

The protein belongs to the putative dsDNA mimic protein family.

In terms of biological role, may act as a double-stranded DNA (dsDNA) mimic. Probably regulates the activity of a dsDNA-binding protein. The polypeptide is Putative double-stranded DNA mimic protein YciU (Salmonella choleraesuis (strain SC-B67)).